The chain runs to 76 residues: Acyl carrier protein (76 aa).

Positions 2–76 constitute a Carrier domain; that stretch reads KDNFTRLQSI…QDVLNYLERN (75 aa). Serine 37 carries the O-(pantetheine 4'-phosphoryl)serine modification.

This sequence belongs to the acyl carrier protein (ACP) family. 4'-phosphopantetheine is transferred from CoA to a specific serine of apo-ACP by AcpS. This modification is essential for activity because fatty acids are bound in thioester linkage to the sulfhydryl of the prosthetic group.

The protein resides in the plastid. Its subcellular location is the chloroplast. It functions in the pathway lipid metabolism; fatty acid biosynthesis. Carrier of the growing fatty acid chain in fatty acid biosynthesis. The sequence is that of Acyl carrier protein from Phaeodactylum tricornutum (strain CCAP 1055/1).